The following is a 411-amino-acid chain: Protein PHLOEM PROTEIN 2-LIKE A5 (411 aa).

One can recognise a TIR domain in the interval 20 to 157 (TGPQVFINFR…KWTEALFSVC (138 aa)). The active site involves Glu-94.

It carries out the reaction NAD(+) + H2O = ADP-D-ribose + nicotinamide + H(+). This is Protein PHLOEM PROTEIN 2-LIKE A5 (PP2A5) from Arabidopsis thaliana (Mouse-ear cress).